An 892-amino-acid chain; its full sequence is DNA mismatch repair protein MutS (892 aa).

Glycine 607–serine 614 serves as a coordination point for ATP. Positions glutamate 833 to leucine 854 are disordered. A compositionally biased stretch (basic and acidic residues) spans serine 845 to leucine 854.

It belongs to the DNA mismatch repair MutS family.

Functionally, this protein is involved in the repair of mismatches in DNA. It is possible that it carries out the mismatch recognition step. This protein has a weak ATPase activity. The sequence is that of DNA mismatch repair protein MutS from Bacillus cereus (strain Q1).